Here is a 416-residue protein sequence, read N- to C-terminus: Multifunctional CCA protein (416 aa).

Positions 8 and 11 each coordinate ATP. Gly-8 and Arg-11 together coordinate CTP. Asp-21 and Asp-23 together coordinate Mg(2+). Residues Arg-91, Arg-137, and Arg-140 each contribute to the ATP site. CTP-binding residues include Arg-91, Arg-137, and Arg-140. Residues 228-335 (SFIHTMLVLK…ITLFNRFDVW (108 aa)) enclose the HD domain.

This sequence belongs to the tRNA nucleotidyltransferase/poly(A) polymerase family. Bacterial CCA-adding enzyme type 1 subfamily. Monomer. Can also form homodimers and oligomers. Requires Mg(2+) as cofactor. Ni(2+) is required as a cofactor.

It catalyses the reaction a tRNA precursor + 2 CTP + ATP = a tRNA with a 3' CCA end + 3 diphosphate. The enzyme catalyses a tRNA with a 3' CCA end + 2 CTP + ATP = a tRNA with a 3' CCACCA end + 3 diphosphate. Catalyzes the addition and repair of the essential 3'-terminal CCA sequence in tRNAs without using a nucleic acid template. Adds these three nucleotides in the order of C, C, and A to the tRNA nucleotide-73, using CTP and ATP as substrates and producing inorganic pyrophosphate. tRNA 3'-terminal CCA addition is required both for tRNA processing and repair. Also involved in tRNA surveillance by mediating tandem CCA addition to generate a CCACCA at the 3' terminus of unstable tRNAs. While stable tRNAs receive only 3'-terminal CCA, unstable tRNAs are marked with CCACCA and rapidly degraded. In Haemophilus influenzae (strain PittGG), this protein is Multifunctional CCA protein.